A 393-amino-acid chain; its full sequence is Homeobox protein knotted-1-like 4 (393 aa).

The span at 1 to 13 (MAFHNNHFNHFTD) shows a compositional bias: polar residues. Disordered stretches follow at residues 1-39 (MAFH…PPNW) and 81-114 (QRGN…EKKE). The 21-residue stretch at 286–306 (ELKHELKQGYKEKIVDIREEI) folds into the ELK domain. The segment at residues 307–370 (LRKRRAGKLP…NQRKRNWHSN (64 aa)) is a DNA-binding region (homeobox; TALE-type). The tract at residues 363–393 (RKRNWHSNPSSSTVSKNKRRSNAGENSGRDR) is disordered. Polar residues predominate over residues 368–377 (HSNPSSSTVS).

This sequence belongs to the TALE/KNOX homeobox family. May form heterodimeric complex with the TALE/BELL proteins. Interacts with OFP1, OFP2, OFP4 and OFP12. Interacts with KNATM-B.

The protein resides in the nucleus. This chain is Homeobox protein knotted-1-like 4 (KNAT4), found in Arabidopsis thaliana (Mouse-ear cress).